The following is a 364-amino-acid chain: Aminomethyltransferase (364 aa).

Belongs to the GcvT family. The glycine cleavage system is composed of four proteins: P, T, L and H.

It carries out the reaction N(6)-[(R)-S(8)-aminomethyldihydrolipoyl]-L-lysyl-[protein] + (6S)-5,6,7,8-tetrahydrofolate = N(6)-[(R)-dihydrolipoyl]-L-lysyl-[protein] + (6R)-5,10-methylene-5,6,7,8-tetrahydrofolate + NH4(+). Its function is as follows. The glycine cleavage system catalyzes the degradation of glycine. The protein is Aminomethyltransferase of Shewanella denitrificans (strain OS217 / ATCC BAA-1090 / DSM 15013).